Reading from the N-terminus, the 1343-residue chain is uncharacterized protein (1343 aa).

The chain crosses the membrane as a helical span at residues 432–449 (LYVYFVTTKTGVVAFSLL).

The protein belongs to the IIV-6 295L family.

Its subcellular location is the membrane. This is an uncharacterized protein from Acheta domesticus (House cricket).